A 183-amino-acid polypeptide reads, in one-letter code: Putative 3-methyladenine DNA glycosylase (183 aa).

Belongs to the DNA glycosylase MPG family.

The protein is Putative 3-methyladenine DNA glycosylase of Legionella pneumophila (strain Corby).